The following is a 266-amino-acid chain: Gasdermin bGSDM (266 aa).

Cys4 carries S-palmitoyl cysteine lipidation. 4 beta stranded membrane passes run 69–85 (INGQ…GINI), 97–114 (AGIE…FEFS), 163–180 (EFTV…QLDV), and 189–205 (GKLK…TVTY). Residues 238–266 (AMALDAAGGVMPSDSALLDEGGLLDLEGF) form a C-terminal region region.

It belongs to the bacterial gasdermin family. In terms of assembly, monomer in solution. Homooligomer; forms homooligomeric ring-shaped pores when inserted in membranes with 48-54 subunits per ring. Post-translationally, palmitoylation helps stabilize the inactive state; may self palmitoylate. Palmitoylation plays a significant role in pore formation.

It is found in the cytoplasm. Its subcellular location is the cell inner membrane. The full-length protein before cleavage is inactive: intramolecular interactions between the N-terminal domain and the C-terminal region as well as the lipid modification, mediate autoinhibition. The pyroptosis-like-inducing activity is carried by the released N-terminal domain (Gasdermin bGSDM, N-terminus). Functionally, precursor of a pore-forming protein involved in defense against bacteriophages. Expression of bGSDM and the neighboring protease gene (Ga0334635_1659) is toxic in E.coli. Cleavage of this precursor by its dedicated protease releases the active moiety (gasdermin bGSDM, N-terminus) which inserts into membranes, forming pores and triggering cell death. Its function is as follows. Pore-forming protein that causes membrane permeabilization, probably via a pyroptosis-like activity. Makes ring-like pores with an interior pore diameter of 200-300 Angstroms, when integrated in liposomes. This Vitiosangium sp. (strain GDMCC 1.1324) protein is Gasdermin bGSDM.